Consider the following 132-residue polypeptide: MWNEFKKFAFKGNVVDLAVGVVIGAAFGKIVSSLVKDIITPLLGMVLGGVDFTSLHFGYGKSAVMYGNFIQTIFDFLIIAASIFMFVKVFNKLTSKKEEEKEEEIPEPTKEEVLLSEIRDLLKQQNSSKDRA.

3 helical membrane passes run 14–34 (VVDL…VSSL), 38–58 (IITP…LHFG), and 67–87 (GNFI…FMFV).

This sequence belongs to the MscL family. Homopentamer.

The protein resides in the cell membrane. Its function is as follows. Channel that opens in response to stretch forces in the membrane lipid bilayer. May participate in the regulation of osmotic pressure changes within the cell. This Bacillus cereus (strain ATCC 10987 / NRS 248) protein is Large-conductance mechanosensitive channel.